We begin with the raw amino-acid sequence, 126 residues long: NADH-quinone oxidoreductase subunit A (126 aa).

3 consecutive transmembrane segments (helical) span residues 14–34, 66–86, and 96–116; these read FLYF…TSWF, FYLI…LYAW, and IGFV…FYLV.

It belongs to the complex I subunit 3 family. In terms of assembly, NDH-1 is composed of 13 different subunits. Subunits NuoA, H, J, K, L, M, N constitute the membrane sector of the complex.

Its subcellular location is the cell membrane. It carries out the reaction a quinone + NADH + 5 H(+)(in) = a quinol + NAD(+) + 4 H(+)(out). In terms of biological role, NDH-1 shuttles electrons from NADH, via FMN and iron-sulfur (Fe-S) centers, to quinones in the respiratory chain. The immediate electron acceptor for the enzyme in this species is believed to be ubiquinone. Couples the redox reaction to proton translocation (for every two electrons transferred, four hydrogen ions are translocated across the cytoplasmic membrane), and thus conserves the redox energy in a proton gradient. This Buchnera aphidicola subsp. Schizaphis graminum (strain Sg) protein is NADH-quinone oxidoreductase subunit A.